We begin with the raw amino-acid sequence, 583 residues long: Membrane protein insertase YidC (583 aa).

The next 6 membrane-spanning stretches (helical) occupy residues 5–25, 341–361, 362–382, 427–447, 473–493, and 520–540; these read SVTG…FMSP, PFAE…VSNY, GLII…LSMA, IGGC…FYVF, FGFA…LMAV, and AMML…YLMF.

It belongs to the OXA1/ALB3/YidC family. Type 1 subfamily. Interacts with the Sec translocase complex via SecD. Specifically interacts with transmembrane segments of nascent integral membrane proteins during membrane integration.

Its subcellular location is the cell inner membrane. Required for the insertion and/or proper folding and/or complex formation of integral membrane proteins into the membrane. Involved in integration of membrane proteins that insert both dependently and independently of the Sec translocase complex, as well as at least some lipoproteins. Aids folding of multispanning membrane proteins. The sequence is that of Membrane protein insertase YidC from Pelodictyon phaeoclathratiforme (strain DSM 5477 / BU-1).